Reading from the N-terminus, the 752-residue chain is MAEPASVTVTFDDVALYFSEQEWEILEKWQKQMYKQEMKTNYETLDSLGYAFSKPDLITWMEQGRMLLISEQGCLDKTRRTTSPPTDEQLNMKNTGKLLCFDDEGTPRTKEEDCRLNGPQKQDLCAALRGKERKILLAQTATFQSPSLRETEILNKKVSITAYDPDKKDLRHKPRETPGRLEIPTGPRCYSCYVCRKVFQVRRDLLKHKRSHSKSQLCRYPKYKNSSRGKSELRRTQRLLCQKKRFQCSECEKSYFLKGSLVTHQVVHTGQRPYPCPECDKTFRYRANLKKHLCLHRGERPFCCGECGRAFVQQCELTEHLRLHSGEKPFQCPQCDRCFRLKRGMKVHLTQHSGKRPFHCPECGRSFSRKAALKTHQRTHSEEKPFSCGECGRKFIYKIKLDEHIRVHTGEKPFSCPECNKSFRLKRSLKAHGLQHIGKRPFQCPECSRGFFWRNAMRAHQRLHSEQKPFPCAECGKRFTRPSKLACHTRVHDRQKEFPCGECKKTFSQQSRLTQHLKVHTTEKPFSCAECGRSFRRRAHLTEHTRLHSGEEPFQCPECDKSFSWKASMKFHQRMHRDEKPFACGECDKTYTHQSQLTEHLRLHSGEKPYQCPECEKTFRLKGNLKSHLLQHSGQKPFSCVMCGKSFTQQYRLTEHIRVHSGEKPFQCPECDKSYCIRGSLKVHLYKHSGERPFQCPECGKGFLQKRSLKAHLCLHSGERPFSCDECGRSFTYVGALKTHIAVHAKEKPSSL.

The KRAB domain maps to 9–80; it reads VTFDDVALYF…EQGCLDKTRR (72 aa). 19 C2H2-type zinc fingers span residues 190-212, 246-268, 274-296, 302-324, 330-352, 358-380, 386-408, 414-436, 442-464, 470-492, 498-520, 526-548, 554-576, 582-604, 610-632, 638-660, 666-688, 694-716, and 722-744; these read YSCYVCRKVFQVRRDLLKHKRSH, FQCSECEKSYFLKGSLVTHQVVH, YPCPECDKTFRYRANLKKHLCLH, FCCGECGRAFVQQCELTEHLRLH, FQCPQCDRCFRLKRGMKVHLTQH, FHCPECGRSFSRKAALKTHQRTH, FSCGECGRKFIYKIKLDEHIRVH, FSCPECNKSFRLKRSLKAHGLQH, FQCPECSRGFFWRNAMRAHQRLH, FPCAECGKRFTRPSKLACHTRVH, FPCGECKKTFSQQSRLTQHLKVH, FSCAECGRSFRRRAHLTEHTRLH, FQCPECDKSFSWKASMKFHQRMH, FACGECDKTYTHQSQLTEHLRLH, YQCPECEKTFRLKGNLKSHLLQH, FSCVMCGKSFTQQYRLTEHIRVH, FQCPECDKSYCIRGSLKVHLYKH, FQCPECGKGFLQKRSLKAHLCLH, and FSCDECGRSFTYVGALKTHIAVH.

Belongs to the krueppel C2H2-type zinc-finger protein family.

The protein localises to the nucleus. It localises to the cytoplasm. Functionally, acts as a transcriptional repressor. The sequence is that of Zinc finger protein 425 (ZNF425) from Homo sapiens (Human).